Reading from the N-terminus, the 288-residue chain is ATP synthase gamma chain (288 aa).

This sequence belongs to the ATPase gamma chain family. As to quaternary structure, F-type ATPases have 2 components, CF(1) - the catalytic core - and CF(0) - the membrane proton channel. CF(1) has five subunits: alpha(3), beta(3), gamma(1), delta(1), epsilon(1). CF(0) has three main subunits: a, b and c.

The protein localises to the cell inner membrane. Produces ATP from ADP in the presence of a proton gradient across the membrane. The gamma chain is believed to be important in regulating ATPase activity and the flow of protons through the CF(0) complex. The polypeptide is ATP synthase gamma chain (Aliivibrio salmonicida (strain LFI1238) (Vibrio salmonicida (strain LFI1238))).